We begin with the raw amino-acid sequence, 787 residues long: Endonuclease MutS2 (787 aa).

334-341 contacts ATP; the sequence is GPNTGGKT. In terms of domain architecture, Smr spans 712–787; sequence LDLRGKRYEE…GNGATIVTFK (76 aa).

Belongs to the DNA mismatch repair MutS family. MutS2 subfamily. Homodimer. Binds to stalled ribosomes, contacting rRNA.

Its function is as follows. Endonuclease that is involved in the suppression of homologous recombination and thus may have a key role in the control of bacterial genetic diversity. In terms of biological role, acts as a ribosome collision sensor, splitting the ribosome into its 2 subunits. Detects stalled/collided 70S ribosomes which it binds and splits by an ATP-hydrolysis driven conformational change. Acts upstream of the ribosome quality control system (RQC), a ribosome-associated complex that mediates the extraction of incompletely synthesized nascent chains from stalled ribosomes and their subsequent degradation. Probably generates substrates for RQC. In Latilactobacillus sakei subsp. sakei (strain 23K) (Lactobacillus sakei subsp. sakei), this protein is Endonuclease MutS2.